Reading from the N-terminus, the 453-residue chain is Probable exopolygalacturonase B (453 aa).

The N-terminal stretch at 1 to 16 (MKFFALAALFASTVNS) is a signal peptide. 2 N-linked (GlcNAc...) asparagine glycosylation sites follow: Asn185 and Asn225. The active-site Proton donor is the Asp255. Cys257 and Cys274 form a disulfide bridge. N-linked (GlcNAc...) asparagine glycosylation is found at Asn263 and Asn275. His278 is an active-site residue. 2 PbH1 repeats span residues 295-316 (IENV…RLKA) and 327-348 (INNV…VLDQ). Asn302, Asn329, Asn354, and Asn366 each carry an N-linked (GlcNAc...) asparagine glycan. A PbH1 3 repeat occupies 362–405 (PSRVNFTNIVFEDIYGTSSGKRGKVVADLTCSPNAVCSGIRLKN). A disulfide bridge links Cys392 with Cys398. An N-linked (GlcNAc...) asparagine glycan is attached at Asn436.

The protein belongs to the glycosyl hydrolase 28 family.

Its subcellular location is the secreted. It carries out the reaction [(1-&gt;4)-alpha-D-galacturonosyl](n) + H2O = alpha-D-galacturonate + [(1-&gt;4)-alpha-D-galacturonosyl](n-1). Its function is as follows. Specific in hydrolyzing the terminal glycosidic bond of polygalacturonic acid and oligogalacturonates. The sequence is that of Probable exopolygalacturonase B (pgxB) from Aspergillus fumigatus (strain CBS 144.89 / FGSC A1163 / CEA10) (Neosartorya fumigata).